The primary structure comprises 462 residues: NAD-capped RNA hydrolase NUDT12 (462 aa).

Lysine 10 carries the N6-succinyllysine modification. 3 ANK repeats span residues 11–40, 45–74, and 78–98; these read EMIS…SLLN, NGWT…DRSL, and ARQT…ANLL. Lysine 185 is subject to N6-succinyllysine. Cysteine 284 and cysteine 287 together coordinate Zn(2+). N6-succinyllysine is present on lysine 292. Residues cysteine 302 and cysteine 307 each contribute to the Zn(2+) site. Residues tyrosine 318, 354-356, glutamate 370, glutamate 374, and glutamate 415 each bind substrate; that span reads AGF. Positions 319-453 constitute a Nudix hydrolase domain; it reads PRVDPVVIMQ…SRAIAHQLIK (135 aa). 4 residues coordinate Mg(2+): alanine 354, glutamate 370, glutamate 374, and glutamate 415. The Nudix box signature appears at 355-376; that stretch reads GFIEPGETIEDAVRREVEEESG. A Microbody targeting signal motif is present at residues 460 to 462; it reads PNL.

This sequence belongs to the Nudix hydrolase family. NudC subfamily. In terms of assembly, homodimer. Homodimerization is essential for its catalytic activity and protein stability. Interacts (via ANK repeats) with BLMH. It depends on Mg(2+) as a cofactor. Zn(2+) serves as cofactor. In terms of tissue distribution, expressed abundantly in the liver and kidney.

The protein localises to the cytoplasm. Its subcellular location is the peroxisome. The protein resides in the cytoplasmic granule. It catalyses the reaction a 5'-end NAD(+)-phospho-ribonucleoside in mRNA + H2O = a 5'-end phospho-adenosine-phospho-ribonucleoside in mRNA + beta-nicotinamide D-ribonucleotide + 2 H(+). The catalysed reaction is NAD(+) + H2O = beta-nicotinamide D-ribonucleotide + AMP + 2 H(+). It carries out the reaction NADH + H2O = reduced beta-nicotinamide D-ribonucleotide + AMP + 2 H(+). The enzyme catalyses NADPH + H2O = reduced beta-nicotinamide D-ribonucleotide + adenosine 2',5'-bisphosphate + 2 H(+). Functionally, mRNA decapping enzyme that specifically removes the nicotinamide adenine dinucleotide (NAD) cap from a subset of mRNAs by hydrolyzing the diphosphate linkage to produce nicotinamide mononucleotide (NMN) and 5' monophosphate mRNA. The NAD-cap is present at the 5'-end of some RNAs; in contrast to the canonical N7 methylguanosine (m7G) cap, the NAD cap promotes mRNA decay. Preferentially acts on NAD-capped transcripts in response to nutrient stress. Also acts on free nicotinamide adenine dinucleotide molecules: hydrolyzes NAD(H) into NMN(H) and AMP, and NADPH into NMNH and 2',5'-ADP. May act to regulate the concentration of peroxisomal nicotinamide nucleotide cofactors required for oxidative metabolism in this organelle. Regulates the levels of circadian clock components PER1, PER2, PER3 and CRY2 in the liver. The protein is NAD-capped RNA hydrolase NUDT12 of Mus musculus (Mouse).